The chain runs to 448 residues: Adenylosuccinate synthetase (448 aa).

GTP-binding positions include 22–28 (GDEGKGK) and 50–52 (GHT). The Proton acceptor role is filled by Asp-23. 2 residues coordinate Mg(2+): Asp-23 and Gly-50. IMP-binding positions include 23-26 (DEGK), 48-51 (NAGH), Thr-139, Arg-153, Gln-234, Thr-249, and Arg-321. The active-site Proton donor is the His-51. 317–323 (SVTGRPR) is a substrate binding site. GTP is bound by residues Arg-323, 349 to 351 (KLD), and 431 to 433 (STG).

It belongs to the adenylosuccinate synthetase family. In terms of assembly, homodimer. It depends on Mg(2+) as a cofactor.

Its subcellular location is the cytoplasm. It catalyses the reaction IMP + L-aspartate + GTP = N(6)-(1,2-dicarboxyethyl)-AMP + GDP + phosphate + 2 H(+). It functions in the pathway purine metabolism; AMP biosynthesis via de novo pathway; AMP from IMP: step 1/2. In terms of biological role, plays an important role in the de novo pathway of purine nucleotide biosynthesis. Catalyzes the first committed step in the biosynthesis of AMP from IMP. In Paraburkholderia xenovorans (strain LB400), this protein is Adenylosuccinate synthetase.